A 270-amino-acid chain; its full sequence is Dermonecrotic toxin LsaSicTox-alphaIB1av (270 aa).

His-2 is a catalytic residue. Positions 22 and 24 each coordinate Mg(2+). The active-site Nucleophile is the His-38. 2 disulfide bridges follow: Cys-42–Cys-48 and Cys-44–Cys-187. Asp-82 lines the Mg(2+) pocket.

Belongs to the arthropod phospholipase D family. Class II subfamily. It depends on Mg(2+) as a cofactor. Expressed by the venom gland.

The protein resides in the secreted. The enzyme catalyses an N-(acyl)-sphingosylphosphocholine = an N-(acyl)-sphingosyl-1,3-cyclic phosphate + choline. The catalysed reaction is an N-(acyl)-sphingosylphosphoethanolamine = an N-(acyl)-sphingosyl-1,3-cyclic phosphate + ethanolamine. It carries out the reaction a 1-acyl-sn-glycero-3-phosphocholine = a 1-acyl-sn-glycero-2,3-cyclic phosphate + choline. It catalyses the reaction a 1-acyl-sn-glycero-3-phosphoethanolamine = a 1-acyl-sn-glycero-2,3-cyclic phosphate + ethanolamine. Functionally, dermonecrotic toxins cleave the phosphodiester linkage between the phosphate and headgroup of certain phospholipids (sphingolipid and lysolipid substrates), forming an alcohol (often choline) and a cyclic phosphate. This toxin acts on sphingomyelin (SM). It may also act on ceramide phosphoethanolamine (CPE), lysophosphatidylcholine (LPC) and lysophosphatidylethanolamine (LPE), but not on lysophosphatidylserine (LPS), and lysophosphatidylglycerol (LPG). It acts by transphosphatidylation, releasing exclusively cyclic phosphate products as second products. Induces dermonecrosis, hemolysis, increased vascular permeability, edema, inflammatory response, and platelet aggregation. In Loxosceles sabina (Tucson recluse spider), this protein is Dermonecrotic toxin LsaSicTox-alphaIB1av.